An 829-amino-acid chain; its full sequence is MKMTRRAFVKANAAASAAAVAGVTLPASATNLIVSSDQTKIKWDKAPCRFCGTGCSVLVGTQNGRVVATQGDPEAPVNKGLNCIKGYFLSKIMYGKDRVQTPMLRMKDGQYNKDGDFAPVSWDVALDTMAEKWKAALKKHGPTGVGMFGSGQWTVMEGYAAVKLMKAGFRSNNIDPNARHCMASAVGAFMRTFGIDEPMGCYDDFENADSFVLWGSNMAEMHPVLWTRISDRRLSHPHVKVNVLSTYYHRSFELADKGYIFEPQSDLAIANFIANYIIQNNAVNWDFVNKHTNFKQATTDIGYGLRDDDPIQMEAANPNSGAMSSISFEEYKKSVAPYTAQKASEMSGVSEEDLITLAKQYADPKTKVMSLWTMGMNQHTRGVWMNSLVYNIHLLTGKIATPGNSPFSLTGQPSACGTAREVGTFSHRLPADMVVANPKHRAISEKIWKLPEGTLNGKPGAHAVVQDRMLKDGKINAYWVMCNNNMQAGPNINTERLPGYRNPENFIVCSDPYPTATAQAADLILPTAMWVEKEGAYGNAERRTQAWYQQVQAKGEAKSDLWQIMEFSKRFKVEEVWGEELVAKAPEYRGKTMYDILFKNGQVDAFPLSEAQELNDDAKAQGFYVQKGLFEEYASFGRGHGHDLAPYDTYHTVRGLRWPVVDGKETLWRFKEGSDPYAKKGSDWDFYGKPDGKALIISAPYEAPPEVPNDEFDMWLCTGRVLEHWHTGTMTRRVPELYKAVPDALCYIHPADAKKRNLRRGDEVLISNKRGEVRVRVETRGRNRPPEGLVFVPFFDARILINKLILDATDPLSKQTDFKKCPVKITKIA.

The segment at residues methionine 1–alanine 29 is a signal peptide (tat-type signal). The region spanning isoleucine 41–aspartate 97 is the 4Fe-4S Mo/W bis-MGD-type domain. [4Fe-4S] cluster-binding residues include cysteine 48, cysteine 51, cysteine 55, and cysteine 83. Mo-bis(molybdopterin guanine dinucleotide) is bound by residues lysine 85, glutamine 152, asparagine 177, cysteine 181, tryptophan 214 to methionine 221, serine 245 to histidine 249, glutamine 264 to aspartate 266, methionine 374, glutamine 378, asparagine 484, serine 510 to aspartate 511, lysine 533, aspartate 560, and threonine 718 to threonine 727. Residue phenylalanine 794 coordinates substrate. Asparagine 802 and lysine 819 together coordinate Mo-bis(molybdopterin guanine dinucleotide).

It belongs to the prokaryotic molybdopterin-containing oxidoreductase family. NasA/NapA/NarB subfamily. As to quaternary structure, component of the periplasmic nitrate reductase NapAB complex composed of NapA and NapB. Requires [4Fe-4S] cluster as cofactor. Mo-bis(molybdopterin guanine dinucleotide) serves as cofactor. Predicted to be exported by the Tat system. The position of the signal peptide cleavage has not been experimentally proven.

Its subcellular location is the periplasm. The enzyme catalyses 2 Fe(II)-[cytochrome] + nitrate + 2 H(+) = 2 Fe(III)-[cytochrome] + nitrite + H2O. Its function is as follows. Catalytic subunit of the periplasmic nitrate reductase complex NapAB. Receives electrons from NapB and catalyzes the reduction of nitrate to nitrite. The polypeptide is Periplasmic nitrate reductase (Aliivibrio fischeri (strain MJ11) (Vibrio fischeri)).